The primary structure comprises 100 residues: Small ribosomal subunit protein uS14c (100 aa).

This sequence belongs to the universal ribosomal protein uS14 family. Part of the 30S ribosomal subunit.

It is found in the plastid. The protein localises to the chloroplast. Binds 16S rRNA, required for the assembly of 30S particles. The protein is Small ribosomal subunit protein uS14c of Zygnema circumcarinatum (Green alga).